A 164-amino-acid polypeptide reads, in one-letter code: S-ribosylhomocysteine lyase (164 aa).

Fe cation-binding residues include His54, His58, and Cys128.

This sequence belongs to the LuxS family. Homodimer. Fe cation is required as a cofactor.

The catalysed reaction is S-(5-deoxy-D-ribos-5-yl)-L-homocysteine = (S)-4,5-dihydroxypentane-2,3-dione + L-homocysteine. Functionally, involved in the synthesis of autoinducer 2 (AI-2) which is secreted by bacteria and is used to communicate both the cell density and the metabolic potential of the environment. The regulation of gene expression in response to changes in cell density is called quorum sensing. Catalyzes the transformation of S-ribosylhomocysteine (RHC) to homocysteine (HC) and 4,5-dihydroxy-2,3-pentadione (DPD). The protein is S-ribosylhomocysteine lyase of Campylobacter jejuni subsp. jejuni serotype O:2 (strain ATCC 700819 / NCTC 11168).